Here is a 672-residue protein sequence, read N- to C-terminus: Peptidoglycan D,D-transpeptidase MrdA (672 aa).

A helical transmembrane segment spans residues I21–Y41. The Acyl-ester intermediate role is filled by S326. The Zn(2+) site is built by D350, D365, H371, and C384. The disordered stretch occupies residues A616–E672. A compositionally biased stretch (low complexity) spans S640–E672.

The protein belongs to the transpeptidase family. MrdA subfamily. Monomer. Zn(2+) is required as a cofactor.

Its subcellular location is the cell inner membrane. It carries out the reaction Preferential cleavage: (Ac)2-L-Lys-D-Ala-|-D-Ala. Also transpeptidation of peptidyl-alanyl moieties that are N-acyl substituents of D-alanine.. Its pathway is cell wall biogenesis; peptidoglycan biosynthesis. Inhibited by the beta-lactams sulbactam and piperacillin-tazobactam. Catalyzes cross-linking of the peptidoglycan cell wall. Involved in the determination of the rod shape of the cell. This is Peptidoglycan D,D-transpeptidase MrdA from Acinetobacter baumannii (strain ATCC 19606 / DSM 30007 / JCM 6841 / CCUG 19606 / CIP 70.34 / NBRC 109757 / NCIMB 12457 / NCTC 12156 / 81).